Here is a 311-residue protein sequence, read N- to C-terminus: 4-hydroxyproline 2-epimerase (311 aa).

Catalysis depends on Cys89, which acts as the Proton acceptor. Residues 90–91 (GH), His209, and Asp233 each bind substrate. Cys237 (proton donor) is an active-site residue. Residue 238–239 (GT) participates in substrate binding.

It belongs to the proline racemase family.

It carries out the reaction trans-4-hydroxy-L-proline = cis-4-hydroxy-D-proline. In terms of biological role, catalyzes the epimerization of trans-4-hydroxy-L-proline (t4LHyp) to cis-4-hydroxy-D-proline (c4DHyp). Is likely involved in a degradation pathway that converts t4LHyp to alpha-ketoglutarate. Displays no proline racemase activity. This Burkholderia ambifaria (strain ATCC BAA-244 / DSM 16087 / CCUG 44356 / LMG 19182 / AMMD) (Burkholderia cepacia (strain AMMD)) protein is 4-hydroxyproline 2-epimerase.